Consider the following 594-residue polypeptide: Interactor of HORMAD1 protein 1 (594 aa).

3 coiled-coil regions span residues 109-135 (VGKS…SETL), 165-189 (QSIL…NDLV), and 219-245 (EMKS…CEQL). The segment covering 434–443 (VEMRGKDKKQ) has biased composition (basic and acidic residues). Residues 434–454 (VEMRGKDKKQQPRKAHRAHRG) are disordered. Basic residues predominate over residues 444 to 454 (QPRKAHRAHRG). A phosphoserine mark is found at Ser-588 and Ser-589.

As to quaternary structure, part of the MCD recombinosome complex, at least composed of IHO1, REC114 and MEI4. Interacts with REC114. Interacts with MEI4. Interacts with HORMAD1. Interacts with ANKRD31.

It is found in the chromosome. In terms of biological role, required for DNA double-strand breaks (DSBs) formation in unsynapsed regions during meiotic recombination. Probably acts by forming a complex with MEI4 and REC114, which activates DSBs formation in unsynapsed regions, an essential step to ensure completion of synapsis. Not required for HORMAD1 functions in pairing-independent synaptonemal complex formation, ATR recruitment to unsynapsed axes, meiotic silencing of unsynapsed chromatin (MSUC) or meiotic surveillance. The polypeptide is Interactor of HORMAD1 protein 1 (Homo sapiens (Human)).